Reading from the N-terminus, the 444-residue chain is E3 ubiquitin-protein ligase RNFT2 (444 aa).

At 1 to 181 the chain is on the extracellular side; sequence MWLFTVNQVL…ILLAKLCFQH (181 aa). 2 disordered regions span residues 13–41 and 92–149; these read MQRR…ASVD and PASR…PGTP. The segment covering 107 to 121 has biased composition (basic residues); sequence YHHRQPHHHFHHGGH. Positions 131–140 are enriched in basic and acidic residues; it reads GGDHRGHSEE. A helical transmembrane segment spans residues 182 to 202; it reads KLGIAVCIGMASTFAYANSTL. The Cytoplasmic segment spans residues 203–214; that stretch reads REQVSLKEKRSV. A helical membrane pass occupies residues 215–235; sequence LVILWILAFLAGNTLYVLYTF. Topologically, residues 236 to 255 are extracellular; the sequence is SSQQLYNSLIFLKPNLEMLD. A helical membrane pass occupies residues 256–276; it reads FFDLLWIVGIADFVLKYITIA. At 277–329 the chain is on the cytoplasmic side; sequence LKCLIVALPKIILAVKSKGKFYLVIEELSQLFRSLVPIQLWYKYIMGDDSSNS. A helical transmembrane segment spans residues 330-350; it reads YFLGGVLIVLYSLCKSFDICG. Topologically, residues 351-444 are extracellular; that stretch reads RVGGVRKALK…GATSAHFQVY (94 aa). The RING-type zinc finger occupies 384 to 422; that stretch reads CAICQAEFREPLILLCQHVFCEECLCLWLDRERTCPLCR.

The protein resides in the membrane. Functionally, E3 ubiquitin-protein ligase that negatively regulates IL3-dependent cellular responses through IL3RA ubiquitination and degradation by the proteasome, having an anti-inflammatory effect. The polypeptide is E3 ubiquitin-protein ligase RNFT2 (Homo sapiens (Human)).